The primary structure comprises 434 residues: Chaperone SurA (434 aa).

A signal peptide spans 1 to 22 (MKPSKHLIFALFALAISQPTMA). PpiC domains lie at 173-274 (DVEY…KIMD) and 283-383 (IEEV…QLEE).

The protein localises to the periplasm. The catalysed reaction is [protein]-peptidylproline (omega=180) = [protein]-peptidylproline (omega=0). Functionally, chaperone involved in the correct folding and assembly of outer membrane proteins. Recognizes specific patterns of aromatic residues and the orientation of their side chains, which are found more frequently in integral outer membrane proteins. May act in both early periplasmic and late outer membrane-associated steps of protein maturation. The chain is Chaperone SurA from Shewanella sp. (strain MR-7).